The sequence spans 385 residues: 5'-AMP-activated protein kinase catalytic subunit alpha-1 (385 aa).

A Protein kinase domain is found at 1 to 229 (DGRVKIGHYI…IKDIREHEWF (229 aa)). Thr-14 bears the Phosphothreonine mark. 15–22 (LGVGTFGK) provides a ligand contact to ATP. Residue Asp-100 is the Proton acceptor of the active site. Thr-133 carries the phosphothreonine; by LKB1 and CaMKK2 modification. 2 positions are modified to phosphothreonine: Thr-219 and Thr-276. The interval 252–297 (EALKQDPLAVAYHLIIDNRDFYLATSPPDSFLDDHHLTRVPFLVAE) is AIS. Residue Ser-277 is modified to Phosphoserine. Phosphoserine; by ULK1 is present on Ser-281. Thr-289 is subject to Phosphothreonine; by ULK1. Thr-298 is subject to Phosphothreonine. Ser-353 and Ser-383 each carry phosphoserine.

The protein belongs to the protein kinase superfamily. CAMK Ser/Thr protein kinase family. SNF1 subfamily. In terms of assembly, AMPK is a heterotrimer of an alpha catalytic subunit (PRKAA1 or PRKAA2), a beta (PRKAB1 or PRKAB2) and a gamma non-catalytic subunits (PRKAG1, PRKAG2 or PRKAG3). Interacts with FNIP1 and FNIP2. It depends on Mg(2+) as a cofactor. Post-translationally, ubiquitinated. In terms of processing, phosphorylated at Thr-133 by STK11/LKB1 in complex with STE20-related adapter-alpha (STRADA) pseudo kinase and CAB39. Also phosphorylated at Thr-133 by CAMKK2; triggered by a rise in intracellular calcium ions, without detectable changes in the AMP/ATP ratio. CAMKK1 can also phosphorylate Thr-133, but at a much lower level. Dephosphorylated by protein phosphatase 2A and 2C (PP2A and PP2C). Phosphorylated by ULK1 and ULK2; leading to negatively regulate AMPK activity and suggesting the existence of a regulatory feedback loop between ULK1, ULK2 and AMPK. Dephosphorylated by PPM1A and PPM1B. Glycosylated; O-GlcNAcylated by OGT, promoting the AMP-activated protein kinase (AMPK) activity.

It localises to the cytoplasm. Its subcellular location is the nucleus. It carries out the reaction L-seryl-[protein] + ATP = O-phospho-L-seryl-[protein] + ADP + H(+). The catalysed reaction is L-threonyl-[protein] + ATP = O-phospho-L-threonyl-[protein] + ADP + H(+). The enzyme catalyses L-seryl-[acetyl-CoA carboxylase] + ATP = O-phospho-L-seryl-[acetyl-CoA carboxylase] + ADP + H(+). It catalyses the reaction L-seryl-[3-hydroxy-3-methylglutaryl-coenzyme A reductase] + ATP = O-phospho-L-seryl-[3-hydroxy-3-methylglutaryl-coenzyme A reductase] + ADP + H(+). It carries out the reaction L-seryl-[tau protein] + ATP = O-phospho-L-seryl-[tau protein] + ADP + H(+). The catalysed reaction is L-threonyl-[tau protein] + ATP = O-phospho-L-threonyl-[tau protein] + ADP + H(+). Its activity is regulated as follows. Activated by phosphorylation on Thr-133. Binding of AMP to non-catalytic gamma subunit (PRKAG1, PRKAG2 or PRKAG3) results in allosteric activation, inducing phosphorylation on Thr-133. AMP-binding to gamma subunit also sustains activity by preventing dephosphorylation of Thr-133. ADP also stimulates Thr-133 phosphorylation, without stimulating already phosphorylated AMPK. ATP promotes dephosphorylation of Thr-133, rendering the enzyme inactive. Under physiological conditions AMPK mainly exists in its inactive form in complex with ATP, which is much more abundant than AMP. Selectively inhibited by compound C (6-[4-(2-Piperidin-1-yl-ethoxy)-phenyl)]-3-pyridin-4-yl-pyyrazolo[1,5-a] pyrimidine. Activated by resveratrol, a natural polyphenol present in red wine, and S17834, a synthetic polyphenol. Catalytic subunit of AMP-activated protein kinase (AMPK), an energy sensor protein kinase that plays a key role in regulating cellular energy metabolism. In response to reduction of intracellular ATP levels, AMPK activates energy-producing pathways and inhibits energy-consuming processes: inhibits protein, carbohydrate and lipid biosynthesis, as well as cell growth and proliferation. AMPK acts via direct phosphorylation of metabolic enzymes, and by longer-term effects via phosphorylation of transcription regulators. Regulates lipid synthesis by phosphorylating and inactivating lipid metabolic enzymes such as ACACA, ACACB, GYS1, HMGCR and LIPE; regulates fatty acid and cholesterol synthesis by phosphorylating acetyl-CoA carboxylase (ACACA and ACACB) and hormone-sensitive lipase (LIPE) enzymes, respectively. Promotes lipolysis of lipid droplets by mediating phosphorylation of isoform 1 of CHKA (CHKalpha2). Regulates insulin-signaling and glycolysis by phosphorylating IRS1, PFKFB2 and PFKFB3. AMPK stimulates glucose uptake in muscle by increasing the translocation of the glucose transporter SLC2A4/GLUT4 to the plasma membrane, possibly by mediating phosphorylation of TBC1D4/AS160. Regulates transcription and chromatin structure by phosphorylating transcription regulators involved in energy metabolism such as CRTC2/TORC2, FOXO3, histone H2B, HDAC5, MEF2C, MLXIPL/ChREBP, EP300, HNF4A, p53/TP53, SREBF1, SREBF2 and PPARGC1A. Acts as a key regulator of glucose homeostasis in liver by phosphorylating CRTC2/TORC2, leading to CRTC2/TORC2 sequestration in the cytoplasm. In response to stress, phosphorylates 'Ser-36' of histone H2B (H2BS36ph), leading to promote transcription. Acts as a key regulator of cell growth and proliferation by phosphorylating FNIP1, TSC2, RPTOR, WDR24 and ATG1/ULK1: in response to nutrient limitation, negatively regulates the mTORC1 complex by phosphorylating RPTOR component of the mTORC1 complex and by phosphorylating and activating TSC2. Also phosphorylates and inhibits GATOR2 subunit WDR24 in response to nutrient limitation, leading to suppress glucose-mediated mTORC1 activation. In response to energetic stress, phosphorylates FNIP1, inactivating the non-canonical mTORC1 signaling, thereby promoting nuclear translocation of TFEB and TFE3, and inducing transcription of lysosomal or autophagy genes. In response to nutrient limitation, promotes autophagy by phosphorylating and activating ATG1/ULK1. In that process also activates WDR45/WIPI4. Phosphorylates CASP6, thereby preventing its autoprocessing and subsequent activation. In response to nutrient limitation, phosphorylates transcription factor FOXO3 promoting FOXO3 mitochondrial import. Also acts as a regulator of cellular polarity by remodeling the actin cytoskeleton; probably by indirectly activating myosin. AMPK also acts as a regulator of circadian rhythm by mediating phosphorylation of CRY1, leading to destabilize it. May regulate the Wnt signaling pathway by phosphorylating CTNNB1, leading to stabilize it. Also has tau-protein kinase activity: in response to amyloid beta A4 protein (APP) exposure, activated by CAMKK2, leading to phosphorylation of MAPT/TAU; however the relevance of such data remains unclear in vivo. Also phosphorylates CFTR, EEF2K, KLC1, NOS3 and SLC12A1. Regulates hepatic lipogenesis. Activated via SIRT3, represses sterol regulatory element-binding protein (SREBP) transcriptional activities and ATP-consuming lipogenesis to restore cellular energy balance. Upon stress, regulates mitochondrial fragmentation through phosphorylation of MTFR1L. This chain is 5'-AMP-activated protein kinase catalytic subunit alpha-1 (PRKAA1), found in Sus scrofa (Pig).